Consider the following 123-residue polypeptide: MDRKKDPSNNLTERRVSKVQRPNKKKVRNQVESLSRNLERNKEGQLLQTVSKGHLEADSGHSLGREKENGELGIRSIFYDKDWNPRGTAPSHYRNIPYNPATFKRRTEVQARLGNLENIKIPK.

Residues 1–16 (MDRKKDPSNNLTERRV) are compositionally biased toward basic and acidic residues. The tract at residues 1–42 (MDRKKDPSNNLTERRVSKVQRPNKKKVRNQVESLSRNLERNK) is disordered. The segment covering 17-28 (SKVQRPNKKKVR) has biased composition (basic residues).

The protein belongs to the AIM4 family. May interact with the nuclear pore complex.

The protein resides in the cytoplasm. This chain is Altered inheritance of mitochondria protein 4 (AIM4), found in Saccharomyces cerevisiae (strain RM11-1a) (Baker's yeast).